We begin with the raw amino-acid sequence, 127 residues long: Small ribosomal subunit protein uS11 (127 aa).

Belongs to the universal ribosomal protein uS11 family. As to quaternary structure, part of the 30S ribosomal subunit. Interacts with proteins S7 and S18. Binds to IF-3.

Its function is as follows. Located on the platform of the 30S subunit, it bridges several disparate RNA helices of the 16S rRNA. Forms part of the Shine-Dalgarno cleft in the 70S ribosome. The chain is Small ribosomal subunit protein uS11 from Flavobacterium johnsoniae (strain ATCC 17061 / DSM 2064 / JCM 8514 / BCRC 14874 / CCUG 350202 / NBRC 14942 / NCIMB 11054 / UW101) (Cytophaga johnsonae).